A 477-amino-acid polypeptide reads, in one-letter code: Ribulose bisphosphate carboxylase large chain (477 aa).

Positions 1–2 (MS) are excised as a propeptide. Proline 3 carries the post-translational modification N-acetylproline. N6,N6,N6-trimethyllysine is present on lysine 14. Substrate contacts are provided by asparagine 123 and threonine 173. Lysine 175 functions as the Proton acceptor in the catalytic mechanism. Position 177 (lysine 177) interacts with substrate. Residues lysine 201, aspartate 203, and glutamate 204 each coordinate Mg(2+). Lysine 201 carries the post-translational modification N6-carboxylysine. Histidine 294 acts as the Proton acceptor in catalysis. Arginine 295, histidine 327, and serine 379 together coordinate substrate.

Belongs to the RuBisCO large chain family. Type I subfamily. As to quaternary structure, heterohexadecamer of 8 large chains and 8 small chains; disulfide-linked. The disulfide link is formed within the large subunit homodimers. Mg(2+) serves as cofactor. The disulfide bond which can form in the large chain dimeric partners within the hexadecamer appears to be associated with oxidative stress and protein turnover.

The protein localises to the plastid. The protein resides in the chloroplast. The enzyme catalyses 2 (2R)-3-phosphoglycerate + 2 H(+) = D-ribulose 1,5-bisphosphate + CO2 + H2O. It carries out the reaction D-ribulose 1,5-bisphosphate + O2 = 2-phosphoglycolate + (2R)-3-phosphoglycerate + 2 H(+). Its function is as follows. RuBisCO catalyzes two reactions: the carboxylation of D-ribulose 1,5-bisphosphate, the primary event in carbon dioxide fixation, as well as the oxidative fragmentation of the pentose substrate in the photorespiration process. Both reactions occur simultaneously and in competition at the same active site. In Manihot esculenta (Cassava), this protein is Ribulose bisphosphate carboxylase large chain.